A 2255-amino-acid polypeptide reads, in one-letter code: Non-reducing polyketide synthase nvfA (2255 aa).

Residues 13-251 (ILFGPQSSDM…HHPDHTAAVE (239 aa)) are N-terminal acylcarrier protein transacylase domain (SAT). Residues 365–781 (VRPIAVTGMA…GSNAAIVLRQ (417 aa)) form the Ketosynthase family 3 (KS3) domain. Catalysis depends on for beta-ketoacyl synthase activity residues Cys-530, His-665, and His-704. Positions 887–1187 (LCFGGQNGNT…QASDLKSPQA (301 aa)) are malonyl-CoA:ACP transacylase (MAT) domain. Ser-974 serves as the catalytic For acyl/malonyl transferase activity. The N-terminal hotdog fold stretch occupies residues 1229–1357 (EPMGLVQVLE…GRISLHPFDS (129 aa)). The region spanning 1229–1536 (EPMGLVQVLE…FTSVSIRALT (308 aa)) is the PKS/mFAS DH domain. The interval 1232-1535 (GLVQVLEKRP…TFTSVSIRAL (304 aa)) is product template (PT) domain. His-1262 (proton acceptor; for dehydratase activity) is an active-site residue. The tract at residues 1385 to 1536 (SSSGLKGSAV…FTSVSIRALT (152 aa)) is C-terminal hotdog fold. The active-site Proton donor; for dehydratase activity is the Asp-1443. Residues 1581-1655 (TNKFPAIQAM…CLVQAIFPGA (75 aa)) enclose the Carrier domain. Residue Ser-1615 is modified to O-(pantetheine 4'-phosphoryl)serine. The methyltransferase (CMeT) domain stretch occupies residues 1809–2042 (HHASEHTLLR…GYNWVNWSCN (234 aa)). Positions 2109-2227 (LLIHGGGHVM…ILSFYCPTDY (119 aa)) are thioesterase (TE) domain. Residue Ser-2194 is the For thioesterase activity of the active site.

It catalyses the reaction 3 malonyl-CoA + acetyl-CoA + 2 S-adenosyl-L-methionine = 3,5-dimethylorsellinate + 2 S-adenosyl-L-homocysteine + 3 CO2 + 4 CoA. It participates in secondary metabolite biosynthesis; terpenoid biosynthesis. Its function is as follows. Non-reducing polyketide synthase; part of the gene cluster that mediates the biosynthesis of novofumigatonin, a heavily oxygenated meroterpenoid containing a unique orthoester moiety. The first step of the pathway is the synthesis of 3,5-dimethylorsellinic acid (DMOA) by the polyketide synthase nvfA via condensation of one acetyl-CoA starter unit with 3 malonyl-CoA units and 2 methylations. DMOA is then converted to farnesyl-DMOA by the farnesyltransferase nvfB. Epoxydation by FAD-dependent monooxygenase nvfK, followed by a protonation-initiated cyclization catalyzed by the terpene cyclase nvfL leads to the production of asnavolin H. The short chain dehydrogenase nvfC then as a 3-OH dehydrogenase of asnovolin H to yield chemesin D. There are two branches to synthesize asnovolin A from chemesin D. In one branch, chemesin D undergoes Baeyer-Villiger oxidation by nvfH, methylation by nvfJ, and enoyl reduction by the nvfM D enoylreductase that reduces the double bond between C-5'and C-6', to form respectively asnovolin I, asnovolin K, and asnovolin A. In the other branch, the methylation precedes the Baeyer-Villiger oxidation and the enoyl reduction to yield asnovolin A via the asnovolin J intermediate. Asnovolin A is further converted to fumigatonoid A by the Fe(II)/2-oxoglutarate-dependent dioxygenase nvfI that catalyzes an endoperoxidation reaction. The alpha/beta hydrolase nvfD then acts as an epimerase that converts fumigatonoid A to its C-5' epimer, which then undergoes spontaneous or nvfD-catalyzed lactonization. The following step utilizes the ketoreductase nvfG to produce fumigatonoid B. The dioxygenase nvfE further converts fumigatonoid B into fumigatonoid C. Finally the Fe(II)/2-oxoglutarate-dependent dioxygenase nvfF catalyzes two rounds of oxidation to transform fumigatonoid C into the end product, novofumigatonin A. This chain is Non-reducing polyketide synthase nvfA, found in Aspergillus novofumigatus (strain IBT 16806).